The primary structure comprises 416 residues: Gamma-glutamyl phosphate reductase (416 aa).

It belongs to the gamma-glutamyl phosphate reductase family.

It localises to the cytoplasm. It catalyses the reaction L-glutamate 5-semialdehyde + phosphate + NADP(+) = L-glutamyl 5-phosphate + NADPH + H(+). It functions in the pathway amino-acid biosynthesis; L-proline biosynthesis; L-glutamate 5-semialdehyde from L-glutamate: step 2/2. In terms of biological role, catalyzes the NADPH-dependent reduction of L-glutamate 5-phosphate into L-glutamate 5-semialdehyde and phosphate. The product spontaneously undergoes cyclization to form 1-pyrroline-5-carboxylate. In Leptospira borgpetersenii serovar Hardjo-bovis (strain JB197), this protein is Gamma-glutamyl phosphate reductase.